Here is a 301-residue protein sequence, read N- to C-terminus: Tyrosine recombinase XerC (301 aa).

One can recognise a Core-binding (CB) domain in the interval 2–84 (TNTQFYITNF…TLRSFFSYLY (83 aa)). One can recognise a Tyr recombinase domain in the interval 105–291 (ALPKFLTVDD…DLKHLIEVYD (187 aa)). Active-site residues include Arg145, Lys169, His243, Arg246, and His269. Tyr278 functions as the O-(3'-phospho-DNA)-tyrosine intermediate in the catalytic mechanism.

The protein belongs to the 'phage' integrase family. XerC subfamily. Forms a cyclic heterotetrameric complex composed of two molecules of XerC and two molecules of XerD.

It is found in the cytoplasm. In terms of biological role, site-specific tyrosine recombinase, which acts by catalyzing the cutting and rejoining of the recombining DNA molecules. The XerC-XerD complex is essential to convert dimers of the bacterial chromosome into monomers to permit their segregation at cell division. It also contributes to the segregational stability of plasmids. The chain is Tyrosine recombinase XerC from Thermodesulfovibrio yellowstonii (strain ATCC 51303 / DSM 11347 / YP87).